The sequence spans 1380 residues: DNA-directed RNA polymerase subunit beta (1380 aa).

The protein belongs to the RNA polymerase beta chain family. The RNAP catalytic core consists of 2 alpha, 1 beta, 1 beta' and 1 omega subunit. When a sigma factor is associated with the core the holoenzyme is formed, which can initiate transcription.

The enzyme catalyses RNA(n) + a ribonucleoside 5'-triphosphate = RNA(n+1) + diphosphate. In terms of biological role, DNA-dependent RNA polymerase catalyzes the transcription of DNA into RNA using the four ribonucleoside triphosphates as substrates. This is DNA-directed RNA polymerase subunit beta from Ehrlichia ruminantium (strain Welgevonden).